A 201-amino-acid polypeptide reads, in one-letter code: Oxalate oxidase 1 (201 aa).

An intrachain disulfide couples cysteine 10 to cysteine 26. Residues 40–191 (SKLTKAGNTS…ALRVEAGVVE (152 aa)) form the Cupin type-1 domain. Asparagine 47 is a glycosylation site (N-linked (GlcNAc...) asparagine). Oxalate contacts are provided by asparagine 75 and asparagine 85. 4 residues coordinate Mn(2+): histidine 88, histidine 90, glutamate 95, and histidine 137. Positions 90 and 95 each coordinate oxalate.

The protein belongs to the germin family. In terms of assembly, homo hexamer; a trimer of dimers. Glycosylated. A form called G contains antennary GlcNAc residues, whereas a form called G' lacks antennary GlcNAc residues in its otherwise identical glycans.

The protein resides in the secreted. Its subcellular location is the extracellular space. It localises to the apoplast. The protein localises to the cell wall. It carries out the reaction oxalate + O2 + 2 H(+) = H2O2 + 2 CO2. Its function is as follows. Releases hydrogen peroxide in the apoplast which may be important for cross-linking reactions in the cell wall biochemistry. May play an important role in several aspects of plant growth and defense mechanisms. This is Oxalate oxidase 1 from Hordeum vulgare (Barley).